The sequence spans 193 residues: Large ribosomal subunit protein bL25 (193 aa).

The protein belongs to the bacterial ribosomal protein bL25 family. CTC subfamily. Part of the 50S ribosomal subunit; part of the 5S rRNA/L5/L18/L25 subcomplex. Contacts the 5S rRNA. Binds to the 5S rRNA independently of L5 and L18.

In terms of biological role, this is one of the proteins that binds to the 5S RNA in the ribosome where it forms part of the central protuberance. The sequence is that of Large ribosomal subunit protein bL25 from Hydrogenovibrio crunogenus (strain DSM 25203 / XCL-2) (Thiomicrospira crunogena).